Here is a 179-residue protein sequence, read N- to C-terminus: Large ribosomal subunit protein uL5 (179 aa).

This sequence belongs to the universal ribosomal protein uL5 family. Part of the 50S ribosomal subunit; part of the 5S rRNA/L5/L18/L25 subcomplex. Contacts the 5S rRNA and the P site tRNA. Forms a bridge to the 30S subunit in the 70S ribosome.

Its function is as follows. This is one of the proteins that bind and probably mediate the attachment of the 5S RNA into the large ribosomal subunit, where it forms part of the central protuberance. In the 70S ribosome it contacts protein S13 of the 30S subunit (bridge B1b), connecting the 2 subunits; this bridge is implicated in subunit movement. Contacts the P site tRNA; the 5S rRNA and some of its associated proteins might help stabilize positioning of ribosome-bound tRNAs. The sequence is that of Large ribosomal subunit protein uL5 from Rickettsia peacockii (strain Rustic).